The primary structure comprises 112 residues: Reprimo-like protein (112 aa).

Residues 59 to 79 form a helical membrane-spanning segment; that stretch reads VVQIAVLCVLSLTVLFGIFFL.

It belongs to the reprimo family.

The protein resides in the membrane. This is Reprimo-like protein (rprml) from Xenopus laevis (African clawed frog).